A 128-amino-acid chain; its full sequence is Orchestin (128 aa).

The first 20 residues, 1–20, serve as a signal peptide directing secretion; that stretch reads MNKVFIIGVCLFIVSQAVLA. The disordered stretch occupies residues 23–95; sequence WDSDESSDER…DEDSDDSQES (73 aa). 2 stretches are compositionally biased toward basic and acidic residues: residues 30–49 and 56–81; these read DERL…KLVV and EDSN…RKLS. Positions 84-93 are enriched in acidic residues; that stretch reads TSDEDSDDSQ.

Phosphorylated on Ser and Tyr residues. Calcium-binding activity is dependent on serine phosphorylation but not on tyrosine phosphorylation. Posterior caeca epithelium of the gut.

The protein localises to the secreted. In terms of biological role, plays a role in cuticle calcification. May induce precipitation of the calcium stored in the posterior caeca as calcium carbonate. This is Orchestin from Cryptorchestia cavimana (Amphipod).